Reading from the N-terminus, the 212-residue chain is Membrane-bound lytic murein transglycosylase E (212 aa).

The protein belongs to the transglycosylase Slt family.

The enzyme catalyses Exolytic cleavage of the (1-&gt;4)-beta-glycosidic linkage between N-acetylmuramic acid (MurNAc) and N-acetylglucosamine (GlcNAc) residues in peptidoglycan, from either the reducing or the non-reducing ends of the peptidoglycan chains, with concomitant formation of a 1,6-anhydrobond in the MurNAc residue.. In terms of biological role, murein-degrading enzyme. May play a role in recycling of muropeptides during cell elongation and/or cell division. The chain is Membrane-bound lytic murein transglycosylase E (mltE) from Buchnera aphidicola subsp. Baizongia pistaciae (strain Bp).